Consider the following 452-residue polypeptide: Plasmepsin I (452 aa).

The Cytoplasmic segment spans residues 1 to 37; it reads MALSIKEDFSSAFAKNESAVNSSTFNNNMKTWKIQKR. Positions 1-123 are excised as a propeptide; it reads MALSIKEDFS…TGLTQKPHLG (123 aa). Residues 38–58 traverse the membrane as a helical; Signal-anchor for type II membrane protein segment; the sequence is FQILYVFFFLLITGALFYYLI. Residues 59-452 are Lumenal-facing; that stretch reads DNVLFPKNKK…VGFALAKKKL (394 aa). The Peptidase A1 domain occupies 139–446; it reads YYGEAQIGDN…DYDNHTVGFA (308 aa). Asp-157 is a catalytic residue. Cysteines 170 and 175 form a disulfide. The active site involves Asp-337. Cys-372 and Cys-408 are oxidised to a cystine.

It belongs to the peptidase A1 family. Not N-glycosylated. In terms of processing, proteolytically cleaved into the soluble active mature form in the digestive vacuole by cysteine protease falcipains; the process begins at the early ring stage. Proteolysis requires an acidic environment.

Its subcellular location is the membrane. It is found in the vacuole lumen. The protein resides in the vacuole membrane. The enzyme catalyses Hydrolysis of the 33-Phe-|-Leu-34 bond in the alpha-chain of hemoglobin, leading to denaturation of molecule.. With respect to regulation, inhibited by KNI derived compounds KNI-10333 and to a lesser extent KNI-10743. Its function is as follows. During the asexual blood stage, catalyzes the initial cleavage of native host hemoglobin (Hb) resulting in Hb denaturation; specifically cleaves between Phe-33 and Leu-34 of Hb alpha-chain. Digestion of host Hb is an essential step which provides the parasite with amino acids for protein synthesis, and regulates osmolarity. The chain is Plasmepsin I from Plasmodium falciparum (isolate 3D7).